The following is a 155-amino-acid chain: Ribonuclease H (155 aa).

The RNase H type-1 domain occupies 1–142; the sequence is MLKQVEIFTD…CDELARAAAM (142 aa). Residues aspartate 10, glutamate 48, aspartate 70, and aspartate 134 each coordinate Mg(2+).

Belongs to the RNase H family. Monomer. It depends on Mg(2+) as a cofactor.

The protein resides in the cytoplasm. The enzyme catalyses Endonucleolytic cleavage to 5'-phosphomonoester.. Its function is as follows. Endonuclease that specifically degrades the RNA of RNA-DNA hybrids. This Salmonella paratyphi C (strain RKS4594) protein is Ribonuclease H.